The following is a 253-amino-acid chain: GTP cyclohydrolase 1 type 2 homolog (253 aa).

A divalent metal cation-binding residues include His-64, His-65, Asp-101, His-222, and Glu-226.

The protein belongs to the GTP cyclohydrolase I type 2/NIF3 family. Homohexamer.

This is GTP cyclohydrolase 1 type 2 homolog from Halobacterium salinarum (strain ATCC 700922 / JCM 11081 / NRC-1) (Halobacterium halobium).